Here is a 391-residue protein sequence, read N- to C-terminus: Multidrug resistance protein MdtL (391 aa).

12 helical membrane passes run 4-24, 42-62, 69-89, 93-113, 131-151, 158-178, 203-222, 245-265, 269-289, 293-313, 331-351, and 356-376; these read FLIC…MYLV, IAFS…GKVA, PVAI…SLAE, LFLA…VVAF, LLNG…HLIM, SLFW…LFIL, FFLS…LTFV, ALTA…LGIF, TLMI…AVSP, VSLF…GVAM, LGIA…VVGI, and MLIG…MFVA.

Belongs to the major facilitator superfamily. DHA1 family. MdtL (TC 2.A.1.2.22) subfamily.

Its subcellular location is the cell inner membrane. Confers resistance to chloramphenicol. The sequence is that of Multidrug resistance protein MdtL from Escherichia coli (strain 55989 / EAEC).